Here is a 313-residue protein sequence, read N- to C-terminus: Protein FixB (313 aa).

255–283 (LYLAVGISGQIQHMVGANASQTIFAINKD) is a binding site for FAD.

Belongs to the ETF alpha-subunit/FixB family. Heterodimer of FixA and FixB.

It participates in amine and polyamine metabolism; carnitine metabolism. Functionally, required for anaerobic carnitine reduction. May bring reductant to CaiA. The protein is Protein FixB of Escherichia coli O8 (strain IAI1).